The sequence spans 160 residues: 3-hydroxyacyl-[acyl-carrier-protein] dehydratase FabZ (160 aa).

The active site involves His-63.

This sequence belongs to the thioester dehydratase family. FabZ subfamily.

It localises to the cytoplasm. The catalysed reaction is a (3R)-hydroxyacyl-[ACP] = a (2E)-enoyl-[ACP] + H2O. Involved in unsaturated fatty acids biosynthesis. Catalyzes the dehydration of short chain beta-hydroxyacyl-ACPs and long chain saturated and unsaturated beta-hydroxyacyl-ACPs. This chain is 3-hydroxyacyl-[acyl-carrier-protein] dehydratase FabZ, found in Xylella fastidiosa (strain 9a5c).